The following is a 254-amino-acid chain: Phosphonates import ATP-binding protein PhnC 2 (254 aa).

The region spanning 4-248 is the ABC transporter domain; it reads LEVNNLGKHY…KIESIYGFQQ (245 aa). 37 to 44 is an ATP binding site; it reads GPSGAGKS.

It belongs to the ABC transporter superfamily. Phosphonates importer (TC 3.A.1.9.1) family. In terms of assembly, the complex is composed of two ATP-binding proteins (PhnC), two transmembrane proteins (PhnE) and a solute-binding protein (PhnD).

The protein resides in the cell membrane. The enzyme catalyses phosphonate(out) + ATP + H2O = phosphonate(in) + ADP + phosphate + H(+). Its function is as follows. Part of the ABC transporter complex PhnCDE involved in phosphonates import. Responsible for energy coupling to the transport system. This is Phosphonates import ATP-binding protein PhnC 2 from Oceanobacillus iheyensis (strain DSM 14371 / CIP 107618 / JCM 11309 / KCTC 3954 / HTE831).